The following is a 207-amino-acid chain: Thymidylate kinase (207 aa).

10–17 (GIEGSGKS) provides a ligand contact to ATP.

This sequence belongs to the thymidylate kinase family.

The enzyme catalyses dTMP + ATP = dTDP + ADP. Functionally, phosphorylation of dTMP to form dTDP in both de novo and salvage pathways of dTTP synthesis. This chain is Thymidylate kinase, found in Halothermothrix orenii (strain H 168 / OCM 544 / DSM 9562).